The following is a 371-amino-acid chain: Protein arginine N-methyltransferase 1 (371 aa).

The SAM-dependent MTase PRMT-type domain maps to 50-361; it reads KDYYFDSYAH…DLDFKGQLCE (312 aa). His-63, Arg-72, Gly-96, and Glu-118 together coordinate S-adenosyl-L-methionine. An S-adenosyl-L-homocysteine-binding site is contributed by Arg-72. Glu-118 contacts S-adenosyl-L-homocysteine. N6-succinyllysine is present on Lys-134. A Glycyl lysine isopeptide (Lys-Gly) (interchain with G-Cter in ubiquitin) cross-link involves residue Lys-145. 2 residues coordinate S-adenosyl-L-homocysteine: Val-146 and Glu-147. Glu-147 provides a ligand contact to S-adenosyl-L-methionine. Residues Glu-162 and Glu-171 contribute to the active site. N6-acetyllysine occurs at positions 228 and 233. Phosphoserine occurs at positions 304 and 307.

The protein belongs to the class I-like SAM-binding methyltransferase superfamily. Protein arginine N-methyltransferase family. As to quaternary structure, homodimer. Homooctamer; individual homodimers associates to form a homooctamer. Individual homodimers can associate to form a homohexamer. Heterodimer with PRMT8. Interacts with BTG1, BTG2, NFATC2IP and IFNAR1. Interacts with and methylates CHTOP, thereby enabling the interaction of CHTOP with the 5FMC complex. Interacts with ILF3 and SUPT5H. Interacts with and methylates FOXO1, leading to the nuclear retention of FOXO1 and the stimulation of FOXO1 transcriptional activity. Methylation of FOXO1 is increased upon oxidative stress. Interacts with and probably methylates ATXN2L. Component of the methylosome, a 20S complex containing at least CLNS1A/pICln, PRMT5/SKB1, WDR77/MEP50, PRMT1 and ERH. Interacts with DHX9 (via RGG region). Interacts (via N-terminus) with HABP4. Interacts with MAP3K5/ASK1; the interaction results in MAP3K5 methylation by PRMT1 which inhibits MAP3K5 activation. Interacts with TRIM48; the interaction results in ubiquitination of PRMT1 by TRIM48, leading to PRMT1 proteasomal degradation and activation of MAP3K5. Interacts with GATOR1 complex; this interaction is S-adenosyl-L-methionine (SAM) dependent and is perturbated by SAMTOR in a SAM-sensitive manner. Interacts with GFI1; promoting recognition and binding of MRE11 and TP53BP1 substrates by PRMT1. Post-translationally, polyubiquitinated at Lys-145 by the SCF(FBXL17) complex, leading to its subsequent degradation. Ubiquitination is regulated by acetylation at Lys-228 and Lys-233. Polyubiquitinated by E3 ubiquitin-protein ligase TRIM48, leading to suppression of MAP3K5/ASK1 methylation and subsequent MAP3K5 activation. In terms of processing, acetylation at Lys-228 and Lys-233 regulates ubiquitination by the SCF(FBXL17) complex. Acetylated at Lys-233 by p300/EP300. Deacetylated at Lys-228 and Lys-233 by SIRT1. In terms of tissue distribution, widely expressed. Expressed strongly in colorectal cancer cells (at protein level). Expressed strongly in colorectal cancer tissues compared to wild-type colon samples (at protein level). Expressed strongly in colorectal cancer tissues compared to wild-type colon samples.

It localises to the nucleus. The protein localises to the nucleoplasm. It is found in the cytoplasm. Its subcellular location is the cytosol. The protein resides in the lysosome membrane. It carries out the reaction L-arginyl-[protein] + 2 S-adenosyl-L-methionine = N(omega),N(omega)-dimethyl-L-arginyl-[protein] + 2 S-adenosyl-L-homocysteine + 2 H(+). The catalysed reaction is L-arginyl-[protein] + S-adenosyl-L-methionine = N(omega)-methyl-L-arginyl-[protein] + S-adenosyl-L-homocysteine + H(+). The enzyme catalyses N(omega)-methyl-L-arginyl-[protein] + S-adenosyl-L-methionine = N(omega),N(omega)-dimethyl-L-arginyl-[protein] + S-adenosyl-L-homocysteine + H(+). Its function is as follows. Arginine methyltransferase that methylates (mono and asymmetric dimethylation) the guanidino nitrogens of arginyl residues present in proteins such as ESR1, histone H2, H3 and H4, FMR1, ILF3, HNRNPA1, HNRNPD, NFATC2IP, SUPT5H, TAF15, EWS, HABP4, SERBP1, RBM15, FOXO1, CHTOP, MAP3K5/ASK1, MICU1 and NPRL2. Constitutes the main enzyme that mediates monomethylation and asymmetric dimethylation of histone H4 'Arg-3' (H4R3me1 and H4R3me2a, respectively), a specific tag for epigenetic transcriptional activation. May be involved in the regulation of TAF15 transcriptional activity, act as an activator of estrogen receptor (ER)-mediated transactivation, play a key role in neurite outgrowth and act as a negative regulator of megakaryocytic differentiation, by modulating p38 MAPK pathway. Methylates RBM15, promoting ubiquitination and degradation of RBM15. Methylates MRE11 and TP53BP1, promoting the DNA damage response. Methylates FOXO1 and retains it in the nucleus increasing its transcriptional activity. Methylates CHTOP and this methylation is critical for its 5-hydroxymethylcytosine (5hmC)-binding activity. Methylates MAP3K5/ASK1 at 'Arg-78' and 'Arg-80' which promotes association of MAP3K5 with thioredoxin and negatively regulates MAP3K5 association with TRAF2, inhibiting MAP3K5 stimulation and MAP3K5-induced activation of JNK. Methylates H4R3 in genes involved in glioblastomagenesis in a CHTOP- and/or TET1-dependent manner. Plays a role in regulating alternative splicing in the heart. Methylates NPRL2 at 'Arg-78' leading to inhibition of its GTPase activator activity and then the GATOR1 complex and consequently inducing timely mTORC1 activation under methionine-sufficient conditions. The sequence is that of Protein arginine N-methyltransferase 1 from Homo sapiens (Human).